The sequence spans 146 residues: Cystatin-C (146 aa).

Residues 1 to 26 (MAGPLRAPLLLLAILAVALALSPAAG) form the signal peptide. At serine 43 the chain carries Phosphoserine. The Secondary area of contact motif lies at 81–85 (QIVAG). 2 cysteine pairs are disulfide-bonded: cysteine 99–cysteine 109 and cysteine 123–cysteine 143.

The protein belongs to the cystatin family.

The protein resides in the secreted. In terms of biological role, as an inhibitor of cysteine proteinases, this protein is thought to serve an important physiological role as a local regulator of this enzyme activity. The chain is Cystatin-C (CST3) from Saimiri sciureus (Common squirrel monkey).